The primary structure comprises 793 residues: Serine/threonine-protein phosphatase BSU1 (793 aa).

Kelch repeat units follow at residues 53 to 109 (STTA…LYGT), 110 to 160 (LILI…IAAQ), 214 to 262 (IFLL…VFGG), 264 to 314 (KLHV…NQYQ), and 329 to 388 (HLYV…EASS). Phosphoserine is present on residues S395 and S444. The Mn(2+) site is built by D510, H512, D544, and N576. Catalysis depends on H577, which acts as the Proton donor. The Mn(2+) site is built by H629 and H707. Phosphoserine is present on S764.

This sequence belongs to the PPP phosphatase family. BSU subfamily. Interacts with CDG1, CDL1 and ASK7/BIN2. The cofactor is Mn(2+). In terms of processing, phosphorylated at Ser-395 and Ser-444. Phosphorylated at Ser-764 by CDG1 and CDL1. Mainly expressed in young, elongating tissues. In young seedlings, it is expressed at the base of the hypocotyl, at the tip and most peripheral cell layers of cotyledons, and in the vascular cylinder of roots, particularly in the elongation zone and at the point of emergence of lateral roots. In mature plants, it is still present in the root vasculature, but almost completely absent in fully expanded stems and leaves. In flowers, it is mainly expressed in sepal veins, anther filaments, and in the style, suggesting that BSU1 is expressed in actively growing regions and apparently enriched in vascular tissues.

It is found in the nucleus. It catalyses the reaction O-phospho-L-seryl-[protein] + H2O = L-seryl-[protein] + phosphate. The enzyme catalyses O-phospho-L-threonyl-[protein] + H2O = L-threonyl-[protein] + phosphate. Its activity is regulated as follows. Activated by phosphorylation at Ser-764 by CDG1. Functionally, phosphatase that acts as a positive regulator of brassinosteroid (BR) signaling. Dephosphorylates BES1, a transcription factor that regulates the expression of BR-response genes, thereby playing an important role in the regulation of response to BRs. Inactivates the negative regulator of BR signaling ASK7/BIN2 by dephosphorylation at 'Tyr-200'. The protein is Serine/threonine-protein phosphatase BSU1 (BSU1) of Arabidopsis thaliana (Mouse-ear cress).